The following is a 20-amino-acid chain: Toxin b subunit beta (20 aa).

As to quaternary structure, toxin b is a heterodimer composed of toxin alpha and toxin beta. As to expression, expressed by the venom gland.

It localises to the secreted. Its function is as follows. Binds to sodium channels (Nav) and affects the channel activation process. The chain is Toxin b subunit beta from Androctonus crassicauda (Arabian fat-tailed scorpion).